The primary structure comprises 310 residues: Ribosomal RNA small subunit methyltransferase H (310 aa).

S-adenosyl-L-methionine is bound by residues 32–34 (GGH), D52, F79, D100, and Q107.

This sequence belongs to the methyltransferase superfamily. RsmH family.

The protein localises to the cytoplasm. It catalyses the reaction cytidine(1402) in 16S rRNA + S-adenosyl-L-methionine = N(4)-methylcytidine(1402) in 16S rRNA + S-adenosyl-L-homocysteine + H(+). In terms of biological role, specifically methylates the N4 position of cytidine in position 1402 (C1402) of 16S rRNA. The chain is Ribosomal RNA small subunit methyltransferase H from Geobacillus thermodenitrificans (strain NG80-2).